Here is a 37-residue protein sequence, read N- to C-terminus: Large ribosomal subunit protein bL36 (37 aa).

Belongs to the bacterial ribosomal protein bL36 family.

This is Large ribosomal subunit protein bL36 from Colwellia psychrerythraea (strain 34H / ATCC BAA-681) (Vibrio psychroerythus).